Consider the following 154-residue polypeptide: Transcriptional repressor NrdR (154 aa).

The segment at 3-34 (CPFCGHAATQVIDTRMSEEGDTVRRRRRCESC) is a zinc-finger region. The region spanning 49–139 (PAVVKKNGSR…VYRSFEDLAE (91 aa)) is the ATP-cone domain.

It belongs to the NrdR family. The cofactor is Zn(2+).

Negatively regulates transcription of bacterial ribonucleotide reductase nrd genes and operons by binding to NrdR-boxes. This is Transcriptional repressor NrdR from Ralstonia pickettii (strain 12J).